Here is a 168-residue protein sequence, read N- to C-terminus: Peptide deformylase 1 (168 aa).

Fe cation contacts are provided by Cys-91 and His-133. Residue Glu-134 is part of the active site. His-137 is a Fe cation binding site.

The protein belongs to the polypeptide deformylase family. Fe(2+) is required as a cofactor.

It carries out the reaction N-terminal N-formyl-L-methionyl-[peptide] + H2O = N-terminal L-methionyl-[peptide] + formate. Functionally, removes the formyl group from the N-terminal Met of newly synthesized proteins. Requires at least a dipeptide for an efficient rate of reaction. N-terminal L-methionine is a prerequisite for activity but the enzyme has broad specificity at other positions. This chain is Peptide deformylase 1, found in Shewanella oneidensis (strain ATCC 700550 / JCM 31522 / CIP 106686 / LMG 19005 / NCIMB 14063 / MR-1).